The following is a 188-amino-acid chain: Ribosomal RNA small subunit methyltransferase G (188 aa).

Residues Gly-69, Phe-74, 119-120 (VQ), and Arg-134 contribute to the S-adenosyl-L-methionine site.

It belongs to the methyltransferase superfamily. RNA methyltransferase RsmG family.

It localises to the cytoplasm. The catalysed reaction is guanosine(527) in 16S rRNA + S-adenosyl-L-methionine = N(7)-methylguanosine(527) in 16S rRNA + S-adenosyl-L-homocysteine. Its function is as follows. Specifically methylates the N7 position of guanine in position 527 of 16S rRNA. In Campylobacter jejuni (strain RM1221), this protein is Ribosomal RNA small subunit methyltransferase G.